The chain runs to 149 residues: Transcriptional regulator MraZ (149 aa).

SpoVT-AbrB domains are found at residues 7 to 54 and 83 to 126; these read KYVN…GISH and AVQL…QPQN.

The protein belongs to the MraZ family. As to quaternary structure, forms oligomers.

The protein localises to the cytoplasm. The protein resides in the nucleoid. In Rickettsia akari (strain Hartford), this protein is Transcriptional regulator MraZ.